The sequence spans 297 residues: MDKQEAKHINMPSPSACEHKSVEAYLFIDPLCKDCWEIEPFIIKLWLEYGKYFSIRHIVTGKVDGTNASSHKWNKPANIRFVWEKTTSLQGFSCDGKVHMQEASSTPYLVSMAIKAAELQGRKAGSKFLRKLQEYIFLENVSNPDCELLLACAKDSNIDVEEFKKDLYSASAKKAFQCDLKFTNEMHITEIPSLVFFHANSDEEGIKIAGTYSYDVYVQLLKELVKCEIEPEPLPPLEVLLEATQFISSKEVAFIYDCSKQEIERELKKLQLKRKVQMIDVKCERYWKWIAKEKDLV.

The protein belongs to the SpxH family. Interacts with Spx.

It is found in the cytoplasm. In terms of biological role, adapter protein required for efficient degradation of Spx by ClpXP under non-stress conditions. Interaction with Spx stabilizes Spx and exposes the C-terminus of Spx for recognition and proteolysis by ClpXP. The chain is ClpXP adapter protein SpxH from Bacillus cereus (strain ATCC 10987 / NRS 248).